A 309-amino-acid chain; its full sequence is Probable lipid kinase YegS-like (309 aa).

In terms of domain architecture, DAGKc spans 1–134 (MTTPRWRLIL…IDLLRVDADG (134 aa)). ATP is bound by residues Thr39, 65-71 (GDGTLSA), and Thr96. Mg(2+)-binding residues include Leu219, Asp222, and Leu224. Glu280 (proton acceptor) is an active-site residue.

Belongs to the diacylglycerol/lipid kinase family. YegS lipid kinase subfamily. Mg(2+) serves as cofactor. Ca(2+) is required as a cofactor.

Its subcellular location is the cytoplasm. Functionally, probably phosphorylates lipids; the in vivo substrate is unknown. This chain is Probable lipid kinase YegS-like, found in Stenotrophomonas maltophilia (strain K279a).